A 99-amino-acid polypeptide reads, in one-letter code: UPF0235 protein HS_1657 (99 aa).

This sequence belongs to the UPF0235 family.

This Histophilus somni (strain 129Pt) (Haemophilus somnus) protein is UPF0235 protein HS_1657.